The primary structure comprises 245 residues: tRNA (guanine-N(1)-)-methyltransferase (245 aa).

S-adenosyl-L-methionine contacts are provided by residues glycine 111 and 131–136; that span reads MGDYVL.

The protein belongs to the RNA methyltransferase TrmD family. In terms of assembly, homodimer.

It localises to the cytoplasm. It catalyses the reaction guanosine(37) in tRNA + S-adenosyl-L-methionine = N(1)-methylguanosine(37) in tRNA + S-adenosyl-L-homocysteine + H(+). In terms of biological role, specifically methylates guanosine-37 in various tRNAs. The sequence is that of tRNA (guanine-N(1)-)-methyltransferase from Staphylococcus epidermidis (strain ATCC 12228 / FDA PCI 1200).